The sequence spans 621 residues: UvrABC system protein C (621 aa).

The GIY-YIG domain maps to 20–106 (TQSGIYQFFD…IKSLKPKYNI (87 aa)). Residues 212–247 (KALLKILESKMHTLSHNLQFEEAAIMRDRIQKITQM) enclose the UVR domain.

Belongs to the UvrC family. As to quaternary structure, interacts with UvrB in an incision complex.

The protein resides in the cytoplasm. Its function is as follows. The UvrABC repair system catalyzes the recognition and processing of DNA lesions. UvrC both incises the 5' and 3' sides of the lesion. The N-terminal half is responsible for the 3' incision and the C-terminal half is responsible for the 5' incision. The protein is UvrABC system protein C of Helicobacter hepaticus (strain ATCC 51449 / 3B1).